The chain runs to 281 residues: Pantothenate synthetase (281 aa).

26 to 33 (MGYLHQGH) serves as a coordination point for ATP. The Proton donor role is filled by His33. (R)-pantoate is bound at residue Gln57. A beta-alanine-binding site is contributed by Gln57. 143–146 (GQKD) provides a ligand contact to ATP. Gln149 contacts (R)-pantoate. ATP is bound by residues Val172 and 180–183 (LSSR).

It belongs to the pantothenate synthetase family. In terms of assembly, homodimer.

It is found in the cytoplasm. The catalysed reaction is (R)-pantoate + beta-alanine + ATP = (R)-pantothenate + AMP + diphosphate + H(+). Its pathway is cofactor biosynthesis; (R)-pantothenate biosynthesis; (R)-pantothenate from (R)-pantoate and beta-alanine: step 1/1. In terms of biological role, catalyzes the condensation of pantoate with beta-alanine in an ATP-dependent reaction via a pantoyl-adenylate intermediate. The chain is Pantothenate synthetase from Chloroflexus aurantiacus (strain ATCC 29366 / DSM 635 / J-10-fl).